The sequence spans 620 residues: Glutathione-regulated potassium-efflux system protein KefC (620 aa).

A run of 12 helical transmembrane segments spans residues 4–24 (HTLL…PIAV), 26–46 (LGLG…PWGL), 54–74 (SILH…GLEL), 90–110 (GALQ…FLGL), 114–134 (VAEL…MQAM), 149–169 (FAVL…IPLL), 178–198 (LGAF…VVLL), 218–238 (VFSA…EEVG), 270–290 (GLLL…GTLV), 294–314 (LRIL…LWLV), 327–347 (WFAV…GAAQ), and 359–379 (ALTL…MLLT). The 120-residue stretch at 399-518 (QPRVIVAGFG…AGVAMPERET (120 aa)) folds into the RCK N-terminal domain. Positions 599–620 (QGTAEGKHSGEAADEPEVKPSI) are disordered.

The protein belongs to the monovalent cation:proton antiporter 2 (CPA2) transporter (TC 2.A.37) family. KefC subfamily. In terms of assembly, homodimer. Interacts with the regulatory subunit KefF.

Its subcellular location is the cell inner membrane. In terms of biological role, pore-forming subunit of a potassium efflux system that confers protection against electrophiles. Catalyzes K(+)/H(+) antiport. This Salmonella heidelberg (strain SL476) protein is Glutathione-regulated potassium-efflux system protein KefC.